The primary structure comprises 768 residues: MSGNNSPINAQLFPDARDVTKDALQTFVELPECTYMKGLGSSQQAEVMACDCKPGPTACDEDSGCINRLTSIECVRCCKGCQNKRFQGKKYASVDVISTEKKGFGLRATKDIAAGEFVYEYVGEVIDEPTFKERTAIYTTQGVKHFYFMMLQKGEFIDATAKGGLGRFCNHSCAPNGHVEKWVVGKRLRMGIFASRHIQRGEEVTFDYNVDRYGAEAQACYCGEKNCVGFLGGKTQTESASKVSGTLTAALGLTSRDINAILRGKKSAEDLRPRDLTVQDVSKVMASLMMNQEAWQVNLMLQRIALCTDTSVQAAVMKMHGYQIFAQILTATWGDNPLGLDDSDRVNVTLMLLRVLQKWPRITKNKISSSQIENVVKSLTSNDNSDIATIAQELLSEWANLKMAFRIPRRKIDPDGDEHSVSRGTSEEVTKESSKSEEPNDVEVVKVNKKADNNGNGVTDSPSTRSESPFTFIPTPYSNKTAPKGPKKAVKQPASPMVPPRSLPKGWQFANDPQGKVYYYNLELNIQQWDFPKASRASSPSTPKGPKGPKGPRGNRRDERRDNSETREPLSLQSQRESDLQRIIEQARLQEVKNNSEPAPSASAKPVNAQAHRLTKLLAKVVPNQVSKYDVDRERAKKCSKDIVQILVDKELKRPEPMTEISDEKAKKIKEFVKGYMGKVVKRLEEKEGGAKDFGRGRQGNRRDSERQSDRRGRQGQSDRDHSDNHGRKRKGEENQPYEAGPMYDDESAETSTETVKKPKVDMEIDLE.

The AWS domain occupies 45–90 (AEVMACDCKPGPTACDEDSGCINRLTSIECVRCCKGCQNKRFQGKK). The 118-residue stretch at 92–209 (ASVDVISTEK…RGEEVTFDYN (118 aa)) folds into the SET domain. A Post-SET domain is found at 216–232 (EAQACYCGEKNCVGFLG). Residues 411–452 (KIDPDGDEHSVSRGTSEEVTKESSKSEEPNDVEVVKVNKKAD) show a composition bias toward basic and acidic residues. Disordered stretches follow at residues 411–508 (KIDP…KGWQ), 533–610 (KASR…VNAQ), and 680–768 (VVKR…IDLE). The span at 453-469 (NNGNGVTDSPSTRSESP) shows a compositional bias: polar residues. The region spanning 501 to 534 (RSLPKGWQFANDPQGKVYYYNLELNIQQWDFPKA) is the WW domain. 3 stretches are compositionally biased toward basic and acidic residues: residues 555 to 568 (NRRDERRDNSETRE), 682 to 734 (KRLE…KGEE), and 755 to 768 (TVKKPKVDMEIDLE).

The protein belongs to the class V-like SAM-binding methyltransferase superfamily. Histone-lysine methyltransferase family. SET2 subfamily.

Its subcellular location is the nucleus. It is found in the chromosome. The catalysed reaction is L-lysyl(36)-[histone H3] + 3 S-adenosyl-L-methionine = N(6),N(6),N(6)-trimethyl-L-lysyl(36)-[histone H3] + 3 S-adenosyl-L-homocysteine + 3 H(+). Functionally, histone methyltransferase that trimethylates histone H3 'Lys-36' forming H3K36me3. Involved in transcription elongation as well as in transcription repression. The protein is Histone-lysine N-methyltransferase, H3 lysine-36 specific (set-2) of Yarrowia lipolytica (strain CLIB 122 / E 150) (Yeast).